The sequence spans 248 residues: 14-3-3-like protein G-BOX factor 14 kappa (248 aa).

Ser70, Ser112, and Ser193 each carry phosphoserine. Thr214 bears the Phosphothreonine mark.

Belongs to the 14-3-3 family. Interacts with the isocitrate dehydrogenase IDH3, and malate dehydrogenases MDH1 and MDH2. Interacts with CINV1.

Its subcellular location is the nucleus. It is found in the cytoplasm. Is associated with a DNA binding complex that binds to the G box, a well-characterized cis-acting DNA regulatory element found in plant genes. Involved in the regulation of nutrient metabolism. Negative regulator of freezing tolerance that modulates cold-responsive C-repeat-binding factors (CBF) DREB1A AND DREB1B proteins stability by facilitating their ubiquitin-mediated degradation; this processus is counteracted by B1L. The polypeptide is 14-3-3-like protein G-BOX factor 14 kappa (Arabidopsis thaliana (Mouse-ear cress)).